The following is a 1466-amino-acid chain: ABC transporter G family member 10 (1466 aa).

Over residues 23 to 45 (NTPQYENNNNNNNNTSGNESPNI) the composition is skewed to low complexity. The tract at residues 23–47 (NTPQYENNNNNNNNTSGNESPNILN) is disordered. Residues 138-392 (VTIFNLFRPS…FLDLGFDCEP (255 aa)) enclose the ABC transporter 1 domain. Residues 497–724 (WGDRFALISK…NGSTMSYQDQ (228 aa)) form the ABC transmembrane type-2 1 domain. Helical transmembrane passes span 501 to 521 (FALISKYISIIVQTFVYASLF), 537 to 557 (AIYAAILFNAFVSAGELGLTF), 586 to 606 (IPLTAIQVTIFSVIVYFMYGL), 611 to 631 (GKFFIFLFTIFGSTLSMVAFF), 641 to 661 (LYVSQNILNVFILFMFTYGGY), and 767 to 787 (IITFLWWIFFVIINMIALELF). An ABC transporter 2 domain is found at 838–1082 (FTWNHIHYTV…LTSYFERNGV (245 aa)). Position 874–881 (874–881 (GSSGAGKT)) interacts with ATP. The ABC transmembrane type-2 2 domain maps to 1177–1399 (SYVYGIFTQA…LTCKEYFKPT (223 aa)). The next 6 helical transmembrane spans lie at 1178 to 1198 (YVYGIFTQAAASGLIIGFTFW), 1214 to 1234 (IFEILFLGILYIFIAIPQFLI), 1253 to 1273 (FAISIVIVELPFVAVAGTICF), 1290 to 1310 (FYFYITFILFLFICVSLGQVV), 1319 to 1339 (LAQTILPLLLVMLFLFCGVLV), and 1440 to 1460 (YGILWAFFIFNIIMVVSFVYL).

The protein belongs to the ABC transporter superfamily. ABCG family. PDR (TC 3.A.1.205) subfamily.

It localises to the membrane. This Dictyostelium discoideum (Social amoeba) protein is ABC transporter G family member 10 (abcG10).